The chain runs to 298 residues: ADP/ATP translocase 2 (298 aa).

Position 1 is an N-acetylmethionine (Met1). At 1-7 the chain is on the mitochondrial intermembrane side; it reads MTDAAVS. Thr2 carries the post-translational modification N-acetylthreonine; in ADP/ATP translocase 2, N-terminally processed. The stretch at 6–98 is one Solcar 1 repeat; sequence VSFAKDFLAG…FAFKDKYKQI (93 aa). Ser7 is subject to Phosphoserine. The helical transmembrane segment at 8-37 threads the bilayer; it reads FAKDFLAGGVAAAISKTAVAPIERVKLLLQ. Lys23 is modified (N6-malonyllysine). The Mitochondrial matrix portion of the chain corresponds to 38–74; that stretch reads VQHASKQITADKQYKGIIDCVVRIPKEQGVLSFWRGN. Lys43 carries the post-translational modification N6-succinyllysine. Position 52 is an N6,N6,N6-trimethyllysine; alternate (Lys52). Position 52 is an N6,N6-dimethyllysine; alternate (Lys52). The residue at position 52 (Lys52) is an N6-methyllysine; alternate. A helical membrane pass occupies residues 75–99; that stretch reads LANVIRYFPTQALNFAFKDKYKQIF. ADP is bound by residues Arg80 and Lys92. 2 positions are modified to N6-malonyllysine: Lys92 and Lys96. At 100 to 109 the chain is on the mitochondrial intermembrane side; the sequence is LGGVDKRTQF. Lys105 carries the N6-acetyllysine; alternate modification. Lys105 carries the N6-succinyllysine; alternate modification. The chain crosses the membrane as a helical span at residues 110–130; that stretch reads WRYFAGNLASGGAAGATSLCF. 2 Solcar repeats span residues 111–201 and 212–297; these read RYFA…AKGM and ISWM…IKKY. Residues 131–178 lie on the Mitochondrial matrix side of the membrane; it reads VYPLDFARTRLAADVGKAGAEREFKGLGDCLVKIYKSDGIKGLYQGFN. Lys147 is modified (N6-methyllysine; alternate). Lys147 and Lys155 each carry N6-acetyllysine; alternate. An N6-succinyllysine; alternate mark is found at Lys147 and Lys155. Lys147 carries the N6-malonyllysine; alternate modification. Lys163 and Lys166 each carry N6-acetyllysine. The chain crosses the membrane as a helical span at residues 179-199; the sequence is VSVQGIIIYRAAYFGIYDTAK. Residues 200–210 lie on the Mitochondrial intermembrane side of the membrane; it reads GMLPDPKNTHI. Residues 211–231 form a helical membrane-spanning segment; sequence FISWMIAQSVTAVAGLTSYPF. Topologically, residues 232 to 273 are mitochondrial matrix; sequence DTVRRRMMMQSGRKGTDIMYTGTLDCWRKIARDEGGKAFFKG. Arg235 serves as a coordination point for ADP. Positions 235–240 are important for transport activity; it reads RRRMMM. The short motif at 235 to 240 is the Nucleotide carrier signature motif element; that stretch reads RRRMMM. Lys268 carries the N6-acetyllysine; alternate modification. At Lys268 the chain carries N6-succinyllysine; alternate. Residues 274–291 form a helical membrane-spanning segment; that stretch reads AWSNVLRGMGGAFVLVLY. The Mitochondrial intermembrane segment spans residues 292–298; sequence DEIKKYT.

This sequence belongs to the mitochondrial carrier (TC 2.A.29) family. In terms of assembly, monomer. Component of the MMXD complex, which includes CIAO1, ERCC2, CIAO2B, MMS19 and SLC25A5/ANT2. Interacts with AK4. Interacts with TIMM44; leading to inhibit the presequence translocase TIMM23, thereby promoting stabilization of PINK1. Post-translationally, trimethylated by ANTKMT at Lys-52. In terms of tissue distribution, present in kidney, brain, heart, liver and skeletal muscle.

The protein localises to the mitochondrion inner membrane. Its subcellular location is the membrane. It carries out the reaction ADP(in) + ATP(out) = ADP(out) + ATP(in). The enzyme catalyses H(+)(in) = H(+)(out). The matrix-open state (m-state) is inhibited by the membrane-permeable bongkrekic acid (BKA). The cytoplasmic-open state (c-state) is inhibited by the membrane-impermeable toxic inhibitor carboxyatractyloside (CATR). Proton transporter activity is inhibited by ADP:ATP antiporter activity. In terms of biological role, ADP:ATP antiporter that mediates import of ADP into the mitochondrial matrix for ATP synthesis, and export of ATP out to fuel the cell. Cycles between the cytoplasmic-open state (c-state) and the matrix-open state (m-state): operates by the alternating access mechanism with a single substrate-binding site intermittently exposed to either the cytosolic (c-state) or matrix (m-state) side of the inner mitochondrial membrane. In addition to its ADP:ATP antiporter activity, also involved in mitochondrial uncoupling and mitochondrial permeability transition pore (mPTP) activity. Plays a role in mitochondrial uncoupling by acting as a proton transporter: proton transport uncouples the proton flows via the electron transport chain and ATP synthase to reduce the efficiency of ATP production and cause mitochondrial thermogenesis. Proton transporter activity is inhibited by ADP:ATP antiporter activity, suggesting that SLC25A5/ANT2 acts as a master regulator of mitochondrial energy output by maintaining a delicate balance between ATP production (ADP:ATP antiporter activity) and thermogenesis (proton transporter activity). Proton transporter activity requires free fatty acids as cofactor, but does not transport it. Probably mediates mitochondrial uncoupling in tissues that do not express UCP1. Also plays a key role in mPTP opening, a non-specific pore that enables free passage of the mitochondrial membranes to solutes of up to 1.5 kDa, and which contributes to cell death. It is however unclear if SLC25A5/ANT2 constitutes a pore-forming component of mPTP or regulates it. Acts as a regulator of mitophagy independently of ADP:ATP antiporter activity: promotes mitophagy via interaction with TIMM44, leading to inhibit the presequence translocase TIMM23, thereby promoting stabilization of PINK1. As part of the mitotic spindle-associated MMXD complex it may play a role in chromosome segregation. The polypeptide is ADP/ATP translocase 2 (Rattus norvegicus (Rat)).